The primary structure comprises 355 residues: Arginine kinase (355 aa).

The 85-residue stretch at 6–90 (TLEKLEAGFS…FDPIIEDYHN (85 aa)) folds into the Phosphagen kinase N-terminal domain. Substrate is bound at residue 63 to 67 (GVGIY). The region spanning 118–355 (FVVSTRVRCG…AELIKIEKSL (238 aa)) is the Phosphagen kinase C-terminal domain. ATP is bound by residues 121–125 (STRVR) and His-184. Position 224 (Glu-224) interacts with substrate. Arg-228 provides a ligand contact to ATP. Residue Cys-270 coordinates substrate. ATP is bound by residues 279–283 (RASVH) and 308–313 (RGTRGE). Glu-313 contacts substrate.

This sequence belongs to the ATP:guanido phosphotransferase family.

The enzyme catalyses L-arginine + ATP = N(omega)-phospho-L-arginine + ADP + H(+). The sequence is that of Arginine kinase (ARGK) from Plodia interpunctella (Indianmeal moth).